The chain runs to 194 residues: dCTP deaminase (194 aa).

DCTP is bound by residues 110–115 (RSSLAR), Asp128, 136–138 (VLE), Tyr171, Lys178, and Gln182. Glu138 serves as the catalytic Proton donor/acceptor. Positions 171–194 (YNKRKNAKYKDQQEAVASRISQDS) are disordered.

The protein belongs to the dCTP deaminase family. Homotrimer.

The catalysed reaction is dCTP + H2O + H(+) = dUTP + NH4(+). Its pathway is pyrimidine metabolism; dUMP biosynthesis; dUMP from dCTP (dUTP route): step 1/2. Its function is as follows. Catalyzes the deamination of dCTP to dUTP. This chain is dCTP deaminase, found in Shewanella amazonensis (strain ATCC BAA-1098 / SB2B).